Consider the following 175-residue polypeptide: Shikimate kinase (175 aa).

10–15 (GAGKTT) is an ATP binding site. Residue Thr14 coordinates Mg(2+). Substrate-binding residues include Asp32, Arg56, and Gly78. Arg116 contributes to the ATP binding site. Arg135 contributes to the substrate binding site.

This sequence belongs to the shikimate kinase family. In terms of assembly, monomer. Mg(2+) serves as cofactor.

It localises to the cytoplasm. The enzyme catalyses shikimate + ATP = 3-phosphoshikimate + ADP + H(+). It functions in the pathway metabolic intermediate biosynthesis; chorismate biosynthesis; chorismate from D-erythrose 4-phosphate and phosphoenolpyruvate: step 5/7. Its function is as follows. Catalyzes the specific phosphorylation of the 3-hydroxyl group of shikimic acid using ATP as a cosubstrate. This Aromatoleum aromaticum (strain DSM 19018 / LMG 30748 / EbN1) (Azoarcus sp. (strain EbN1)) protein is Shikimate kinase.